Consider the following 252-residue polypeptide: Phosphate import ATP-binding protein PstB (252 aa).

Residues 5 to 247 (MRGQDVKVFY…PKEQRTQDYI (243 aa)) enclose the ABC transporter domain. 37–44 (GPSGCGKS) contributes to the ATP binding site.

The protein belongs to the ABC transporter superfamily. Phosphate importer (TC 3.A.1.7) family. The complex is composed of two ATP-binding proteins (PstB), two transmembrane proteins (PstC and PstA) and a solute-binding protein (PstS).

The protein localises to the cell inner membrane. It carries out the reaction phosphate(out) + ATP + H2O = ADP + 2 phosphate(in) + H(+). In terms of biological role, part of the ABC transporter complex PstSACB involved in phosphate import. Responsible for energy coupling to the transport system. This Bartonella quintana (strain Toulouse) (Rochalimaea quintana) protein is Phosphate import ATP-binding protein PstB.